Consider the following 471-residue polypeptide: Heat shock 70 kDa protein 13 (471 aa).

The N-terminal stretch at 1–22 is a signal peptide; sequence MAGEMTILGSAVLTLLLAGYLA. Residues 315–337 form a disordered region; it reads ENDRKGPPTSDSELPKDKFSQAN.

This sequence belongs to the heat shock protein 70 family. In terms of assembly, binds UBQLN2.

It localises to the microsome. Its subcellular location is the endoplasmic reticulum. Functionally, has peptide-independent ATPase activity. This Bos taurus (Bovine) protein is Heat shock 70 kDa protein 13 (HSPA13).